The sequence spans 490 residues: Acetyl-coenzyme A carboxylase carboxyl transferase subunit beta, chloroplastic (490 aa).

One can recognise a CoA carboxyltransferase N-terminal domain in the interval 221 to 490 (LWVQCENCYG…PLNQKSSKIK (270 aa)). Cys-225, Cys-228, Cys-244, and Cys-247 together coordinate Zn(2+). The C4-type zinc-finger motif lies at 225–247 (CENCYGLNYKKFLKSKMNICEQC).

The protein belongs to the AccD/PCCB family. Acetyl-CoA carboxylase is a heterohexamer composed of biotin carboxyl carrier protein, biotin carboxylase and 2 subunits each of ACCase subunit alpha and ACCase plastid-coded subunit beta (accD). Zn(2+) is required as a cofactor. In terms of tissue distribution, expressed in leaves, ripening and mature fruit.

It localises to the plastid. The protein resides in the chloroplast stroma. The protein localises to the chromoplast stroma. The enzyme catalyses N(6)-carboxybiotinyl-L-lysyl-[protein] + acetyl-CoA = N(6)-biotinyl-L-lysyl-[protein] + malonyl-CoA. It functions in the pathway lipid metabolism; malonyl-CoA biosynthesis; malonyl-CoA from acetyl-CoA: step 1/1. Functionally, component of the acetyl coenzyme A carboxylase (ACC) complex. Biotin carboxylase (BC) catalyzes the carboxylation of biotin on its carrier protein (BCCP) and then the CO(2) group is transferred by the transcarboxylase to acetyl-CoA to form malonyl-CoA. Is up-regulated upon chromoplast differentiation, presumably for fatty acid biosynthesis. The polypeptide is Acetyl-coenzyme A carboxylase carboxyl transferase subunit beta, chloroplastic (Solanum lycopersicum (Tomato)).